The primary structure comprises 307 residues: Stage III sporulation protein AA (307 aa).

143 to 150 (GPPQTGKT) serves as a coordination point for ATP.

The sequence is that of Stage III sporulation protein AA (spoIIIAA) from Bacillus subtilis (strain 168).